We begin with the raw amino-acid sequence, 639 residues long: 3D-(3,5/4)-trihydroxycyclohexane-1,2-dione hydrolase (639 aa).

Glutamate 65 lines the thiamine diphosphate pocket. The segment at 437-517 (SLPGDLQRMW…INIILFDNSG (81 aa)) is thiamine pyrophosphate binding. Residues aspartate 488 and asparagine 515 each contribute to the Mg(2+) site.

This sequence belongs to the TPP enzyme family. The cofactor is Mg(2+). Requires thiamine diphosphate as cofactor.

It carries out the reaction 3D-3,5/4-trihydroxycyclohexane-1,2-dione + H2O = 5-deoxy-D-glucuronate + H(+). Its pathway is polyol metabolism; myo-inositol degradation into acetyl-CoA; acetyl-CoA from myo-inositol: step 3/7. Involved in the cleavage of the C1-C2 bond of 3D-(3,5/4)-trihydroxycyclohexane-1,2-dione (THcHDO) to yield 5-deoxy-glucuronate (5DG). The protein is 3D-(3,5/4)-trihydroxycyclohexane-1,2-dione hydrolase of Geobacillus thermodenitrificans (strain NG80-2).